The chain runs to 198 residues: V-type ATP synthase subunit E (198 aa).

Belongs to the V-ATPase E subunit family.

Its function is as follows. Produces ATP from ADP in the presence of a proton gradient across the membrane. In Clostridium perfringens (strain ATCC 13124 / DSM 756 / JCM 1290 / NCIMB 6125 / NCTC 8237 / Type A), this protein is V-type ATP synthase subunit E.